The sequence spans 516 residues: Cytochrome P450 1A2 (516 aa).

S69 is a glycosylation site (O-linked (GlcNAc) serine). Substrate is bound at residue F226. A heme-binding site is contributed by C458.

This sequence belongs to the cytochrome P450 family. Interacts with PGRMC1; the interaction requires PGRMC1 homodimerization. The cofactor is heme.

It is found in the endoplasmic reticulum membrane. Its subcellular location is the microsome membrane. The enzyme catalyses an organic molecule + reduced [NADPH--hemoprotein reductase] + O2 = an alcohol + oxidized [NADPH--hemoprotein reductase] + H2O + H(+). The catalysed reaction is 17beta-estradiol + reduced [NADPH--hemoprotein reductase] + O2 = 2-hydroxy-17beta-estradiol + oxidized [NADPH--hemoprotein reductase] + H2O + H(+). It catalyses the reaction 17beta-estradiol + reduced [NADPH--hemoprotein reductase] + O2 = 4-hydroxy-17beta-estradiol + oxidized [NADPH--hemoprotein reductase] + H2O + H(+). It carries out the reaction estrone + reduced [NADPH--hemoprotein reductase] + O2 = 2-hydroxyestrone + oxidized [NADPH--hemoprotein reductase] + H2O + H(+). The enzyme catalyses estrone + reduced [NADPH--hemoprotein reductase] + O2 = 4-hydroxyestrone + oxidized [NADPH--hemoprotein reductase] + H2O + H(+). The catalysed reaction is cholesterol + reduced [NADPH--hemoprotein reductase] + O2 = 25-hydroxycholesterol + oxidized [NADPH--hemoprotein reductase] + H2O + H(+). It catalyses the reaction all-trans-retinol + reduced [NADPH--hemoprotein reductase] + O2 = all-trans-retinal + oxidized [NADPH--hemoprotein reductase] + 2 H2O + H(+). It carries out the reaction all-trans-retinal + reduced [NADPH--hemoprotein reductase] + O2 = all-trans-retinoate + oxidized [NADPH--hemoprotein reductase] + H2O + 2 H(+). The enzyme catalyses (5Z,8Z,11Z,14Z)-eicosatetraenoate + reduced [NADPH--hemoprotein reductase] + O2 = (14R,15S)-epoxy-(5Z,8Z,11Z)-eicosatrienoate + oxidized [NADPH--hemoprotein reductase] + H2O + H(+). The catalysed reaction is (5Z,8Z,11Z,14Z)-eicosatetraenoate + reduced [NADPH--hemoprotein reductase] + O2 = (14S,15R)-epoxy-(5Z,8Z,11Z)-eicosatrienoate + oxidized [NADPH--hemoprotein reductase] + H2O + H(+). It catalyses the reaction (5Z,8Z,11Z,14Z,17Z)-eicosapentaenoate + reduced [NADPH--hemoprotein reductase] + O2 = (17R,18S)-epoxy-(5Z,8Z,11Z,14Z)-eicosatetraenoate + oxidized [NADPH--hemoprotein reductase] + H2O + H(+). It carries out the reaction (4Z,7Z,10Z,13Z,16Z,19Z)-docosahexaenoate + reduced [NADPH--hemoprotein reductase] + O2 = (19R,20S)-epoxy-(4Z,7Z,10Z,13Z,16Z)-docosapentaenoate + oxidized [NADPH--hemoprotein reductase] + H2O + H(+). The enzyme catalyses (5S)-hydroperoxy-(6E,8Z,11Z,14Z)-eicosatetraenoate = 5-oxo-(6E,8Z,11Z,14Z)-eicosatetraenoate + H2O. The catalysed reaction is (12S)-hydroperoxy-(5Z,8Z,10E,14Z)-eicosatetraenoate = 12-oxo-(5Z,8Z,10E,14Z)-eicosatetraenoate + H2O. It catalyses the reaction (15S)-hydroperoxy-(5Z,8Z,11Z,13E)-eicosatetraenoate = 15-oxo-(5Z,8Z,11Z,13E)-eicosatetraenoate + H2O. It carries out the reaction (13S)-hydroperoxy-(9Z,11E)-octadecadienoate = 13-oxo-(9Z,11E)-octadecadienoate + H2O. The enzyme catalyses (5Z,8Z,11Z,14Z)-eicosatetraenoate + reduced [NADPH--hemoprotein reductase] + O2 = 13-hydroxy-(5Z,8Z,11Z,14Z)-eicosatetraenoate + oxidized [NADPH--hemoprotein reductase] + H2O + H(+). The catalysed reaction is (5Z,8Z,11Z,14Z)-eicosatetraenoate + reduced [NADPH--hemoprotein reductase] + O2 = 19-hydroxy-(5Z,8Z,11Z,14Z)-eicosatetraenoate + oxidized [NADPH--hemoprotein reductase] + H2O + H(+). It catalyses the reaction (9Z,12Z)-octadecadienoate + reduced [NADPH--hemoprotein reductase] + O2 = 11-hydroxy-(9Z,12Z)-octadecadienoate + oxidized [NADPH--hemoprotein reductase] + H2O + H(+). It participates in cofactor metabolism; retinol metabolism. It functions in the pathway steroid metabolism; cholesterol metabolism. The protein operates within lipid metabolism; arachidonate metabolism. A cytochrome P450 monooxygenase involved in the metabolism of various endogenous substrates, including fatty acids, steroid hormones and vitamins. Mechanistically, uses molecular oxygen inserting one oxygen atom into a substrate, and reducing the second into a water molecule, with two electrons provided by NADPH via cytochrome P450 reductase (NADPH--hemoprotein reductase). Catalyzes the hydroxylation of carbon-hydrogen bonds. Exhibits high catalytic activity for the formation of hydroxyestrogens from estrone (E1) and 17beta-estradiol (E2), namely 2-hydroxy E1 and E2. Metabolizes cholesterol toward 25-hydroxycholesterol, a physiological regulator of cellular cholesterol homeostasis. May act as a major enzyme for all-trans retinoic acid biosynthesis in the liver. Catalyzes two successive oxidative transformation of all-trans retinol to all-trans retinal and then to the active form all-trans retinoic acid. Primarily catalyzes stereoselective epoxidation of the last double bond of polyunsaturated fatty acids (PUFA), displaying a strong preference for the (R,S) stereoisomer. Catalyzes bisallylic hydroxylation and omega-1 hydroxylation of PUFA. May also participate in eicosanoids metabolism by converting hydroperoxide species into oxo metabolites (lipoxygenase-like reaction, NADPH-independent). Plays a role in the oxidative metabolism of xenobiotics. Catalyzes the N-hydroxylation of heterocyclic amines and the O-deethylation of phenacetin. Metabolizes caffeine via N3-demethylation. This Pongo abelii (Sumatran orangutan) protein is Cytochrome P450 1A2 (CYP1A2).